A 475-amino-acid polypeptide reads, in one-letter code: Sulfate adenylyltransferase subunit 1 (475 aa).

Positions 25–239 constitute a tr-type G domain; that stretch reads KSLLRFLTCG…EVLETVEIQR (215 aa). The tract at residues 34 to 41 is G1; that stretch reads GSVDDGKS. Position 34 to 41 (34 to 41) interacts with GTP; the sequence is GSVDDGKS. Residues 92 to 96 are G2; that stretch reads GITID. A G3 region spans residues 113–116; the sequence is DTPG. GTP-binding positions include 113–117 and 168–171; these read DTPGH and NKMD. The tract at residues 168 to 171 is G4; the sequence is NKMD. Positions 206–208 are G5; it reads SAL.

It belongs to the TRAFAC class translation factor GTPase superfamily. Classic translation factor GTPase family. CysN/NodQ subfamily. Heterodimer composed of CysD, the smaller subunit, and CysN.

It carries out the reaction sulfate + ATP + H(+) = adenosine 5'-phosphosulfate + diphosphate. Its pathway is sulfur metabolism; hydrogen sulfide biosynthesis; sulfite from sulfate: step 1/3. Functionally, with CysD forms the ATP sulfurylase (ATPS) that catalyzes the adenylation of sulfate producing adenosine 5'-phosphosulfate (APS) and diphosphate, the first enzymatic step in sulfur assimilation pathway. APS synthesis involves the formation of a high-energy phosphoric-sulfuric acid anhydride bond driven by GTP hydrolysis by CysN coupled to ATP hydrolysis by CysD. The polypeptide is Sulfate adenylyltransferase subunit 1 (Escherichia coli O139:H28 (strain E24377A / ETEC)).